Consider the following 386-residue polypeptide: Caspase-1-A (386 aa).

A propeptide spanning residues 1-100 (MTAQLNKVRR…PPMAPVPIQE (100 aa)) is cleaved from the precursor. In terms of domain architecture, CARD spans 22-88 (SDLLDDLREK…HKTLAKSLGL (67 aa)). Catalysis depends on residues histidine 218 and cysteine 274. Residues 287 to 296 (DVASPPLEDD) constitute a propeptide that is removed on maturation.

This sequence belongs to the peptidase C14A family. Heterotetramer that consists of two anti-parallel arranged heterodimers, each one formed by a 20 kDa (Caspase-1 subunit p20) and a 10 kDa (Caspase-1 subunit p10) subunit. In terms of assembly, heterotetramer that consists of two anti-parallel arranged heterodimers, each one formed by a 20 kDa (Caspase-1 subunit p20) and a 10 kDa (Caspase-1 subunit p10) subunit. Can form a heterodimer with isoform epsilon which then has an inhibitory effect. In terms of processing, the two subunits are derived from the precursor sequence by an autocatalytic mechanism.

The protein resides in the cytoplasm. It localises to the cell membrane. It carries out the reaction Strict requirement for an Asp residue at position P1 and has a preferred cleavage sequence of Tyr-Val-Ala-Asp-|-.. Its function is as follows. Thiol protease involved in a variety of inflammatory processes by proteolytically cleaving other proteins, such as the precursors of the inflammatory cytokines interleukin-1 beta (IL1B) and interleukin 18 (IL18) as well as the pyroptosis inducer Gasdermin-D (GSDMD), into active mature peptides. Plays a key role in cell immunity as an inflammatory response initiator: once activated through formation of an inflammasome complex, it initiates a pro-inflammatory response through the cleavage of the two inflammatory cytokines IL1B and IL18, releasing the mature cytokines which are involved in a variety of inflammatory processes. Cleaves a tetrapeptide after an Asp residue at position P1. Also initiates pyroptosis, a programmed lytic cell death pathway, through cleavage of GSDMD. This is Caspase-1-A (casp1-a) from Xenopus laevis (African clawed frog).